The primary structure comprises 212 residues: Ribosome biogenesis protein RLP7 (212 aa).

The protein belongs to the universal ribosomal protein uL30 family.

The protein resides in the nucleus. It localises to the nucleolus. In terms of biological role, involved in the biogenesis of the 60S ribosomal subunit. May act as a specificity factor that binds precursor rRNAs and tethers the enzymes that carry out the early 5' to 3' exonucleolytic reactions that generate the mature rRNAs. This is Ribosome biogenesis protein RLP7 (RLP7) from Cyberlindnera jadinii (Torula yeast).